The sequence spans 89 residues: Small ribosomal subunit protein bS16c (89 aa).

Belongs to the bacterial ribosomal protein bS16 family.

Its subcellular location is the plastid. It is found in the chloroplast. This Drimys granadensis protein is Small ribosomal subunit protein bS16c.